The sequence spans 241 residues: Pyridoxal phosphate phosphatase PHOSPHO2 (241 aa).

Asp-8 (nucleophile) is an active-site residue. Mg(2+) contacts are provided by Asp-8 and Asp-10. The Proton donor role is filled by Asp-10. 2 residues coordinate substrate: Asp-19 and Asp-99. Asp-179 contributes to the Mg(2+) binding site.

Belongs to the HAD-like hydrolase superfamily. PHOSPHO family. The cofactor is Mg(2+).

The enzyme catalyses pyridoxal 5'-phosphate + H2O = pyridoxal + phosphate. Phosphatase that has high activity toward pyridoxal 5'-phosphate (PLP). Also active at much lower level toward pyrophosphate, phosphoethanolamine (PEA), phosphocholine (PCho), phospho-l-tyrosine, fructose-6-phosphate, p-nitrophenyl phosphate, and h-glycerophosphate. The sequence is that of Pyridoxal phosphate phosphatase PHOSPHO2 (Phospho2) from Rattus norvegicus (Rat).